Here is a 442-residue protein sequence, read N- to C-terminus: Probable glycine dehydrogenase (decarboxylating) subunit 1 (442 aa).

This sequence belongs to the GcvP family. N-terminal subunit subfamily. The glycine cleavage system is composed of four proteins: P, T, L and H. In this organism, the P 'protein' is a heterodimer of two subunits.

The enzyme catalyses N(6)-[(R)-lipoyl]-L-lysyl-[glycine-cleavage complex H protein] + glycine + H(+) = N(6)-[(R)-S(8)-aminomethyldihydrolipoyl]-L-lysyl-[glycine-cleavage complex H protein] + CO2. The glycine cleavage system catalyzes the degradation of glycine. The P protein binds the alpha-amino group of glycine through its pyridoxal phosphate cofactor; CO(2) is released and the remaining methylamine moiety is then transferred to the lipoamide cofactor of the H protein. The polypeptide is Probable glycine dehydrogenase (decarboxylating) subunit 1 (Geotalea daltonii (strain DSM 22248 / JCM 15807 / FRC-32) (Geobacter daltonii)).